A 216-amino-acid chain; its full sequence is Ras-related protein Rab-2B (216 aa).

GDP is bound by residues glycine 16, valine 17, glycine 18, lysine 19, serine 20, and cysteine 21. The GTP site is built by glycine 16, valine 17, glycine 18, lysine 19, serine 20, cysteine 21, and threonine 38. Serine 20 is a binding site for Mg(2+). The Switch 1 motif lies at 37-42 (LTIGVE). Mg(2+) is bound by residues threonine 38 and aspartate 61. The short motif at 63–72 (AGQESFRSIT) is the Switch 2 element. GTP-binding residues include glycine 64, asparagine 119, lysine 120, aspartate 122, alanine 150, and lysine 151. Asparagine 119 provides a ligand contact to GDP. 3 residues coordinate GDP: aspartate 122, alanine 150, and lysine 151. Residues 189–216 (PQQSISTSVGPSASQRNSRDIGSNSGCC) form a disordered region. Serine 202 bears the Phosphoserine mark. 2 S-geranylgeranyl cysteine lipidation sites follow: cysteine 215 and cysteine 216.

Belongs to the small GTPase superfamily. Rab family. As to quaternary structure, interacts (in GTP-bound form) with GARIN4 (via N-terminus). Interacts (in GTP-bound form) with GARIN5A. Interacts (in GTP-bound form) with GARIN1B. Interacts with VPS39 and VPS41. It depends on Mg(2+) as a cofactor. Expressed in kidney, prostate, lung, liver, thymus, colon, pancreas, and skeletal muscle, and low levels in placenta. Not detected in heart, brain, spleen, testis, ovary, small intestine and leukocyte.

Its subcellular location is the cell membrane. The protein localises to the endoplasmic reticulum membrane. The protein resides in the golgi apparatus membrane. It localises to the cytoplasmic vesicle. It is found in the secretory vesicle. Its subcellular location is the acrosome. The protein localises to the autophagosome membrane. The enzyme catalyses GTP + H2O = GDP + phosphate + H(+). Regulated by guanine nucleotide exchange factors (GEFs) which promote the exchange of bound GDP for free GTP, GTPase activating proteins (GAPs) which increase the GTP hydrolysis activity, and GDP dissociation inhibitors (GDIs) which inhibit the dissociation of the nucleotide from the GTPase. Its function is as follows. The small GTPases Rab are key regulators of intracellular membrane trafficking, from the formation of transport vesicles to their fusion with membranes. Rabs cycle between active GTP-bound and inactive GDP-bound states. In their active state, drive transport of vesicular carriers from donor organelles to acceptor organelles to regulate the membrane traffic that maintains organelle identity and morphology. Regulates the compacted morphology of the Golgi. Promotes cytosolic DNA-induced innate immune responses. Regulates IFN responses against DNA viruses by regulating the CGAS-STING signaling axis. Together with RAB2A redundantly required for efficient autophagic flux. In Homo sapiens (Human), this protein is Ras-related protein Rab-2B.